A 146-amino-acid polypeptide reads, in one-letter code: 3-dehydroquinate dehydratase (146 aa).

Tyrosine 22 (proton acceptor) is an active-site residue. Residues asparagine 73, histidine 79, and aspartate 86 each contribute to the substrate site. Catalysis depends on histidine 99, which acts as the Proton donor. Residues 100–101 and arginine 110 each bind substrate; that span reads LS.

The protein belongs to the type-II 3-dehydroquinase family. Homododecamer.

It carries out the reaction 3-dehydroquinate = 3-dehydroshikimate + H2O. Its pathway is metabolic intermediate biosynthesis; chorismate biosynthesis; chorismate from D-erythrose 4-phosphate and phosphoenolpyruvate: step 3/7. Functionally, catalyzes a trans-dehydration via an enolate intermediate. This is 3-dehydroquinate dehydratase from Parasynechococcus marenigrum (strain WH8102).